The chain runs to 427 residues: 3-deoxy-D-manno-octulosonic acid transferase (427 aa).

Residues 4–24 form a helical; Signal-anchor membrane-spanning segment; the sequence is FFYTSLLLICQPLILCFIGLL. The active-site Proton acceptor is Glu-62. Residues 270–271, 311–313, and 337–340 each bind CMP; these read PR, MGE, and NPLE.

The protein belongs to the glycosyltransferase group 1 family. Glycosyltransferase 30 subfamily.

Its subcellular location is the cell inner membrane. The enzyme catalyses lipid IVA (E. coli) + CMP-3-deoxy-beta-D-manno-octulosonate = alpha-Kdo-(2-&gt;6)-lipid IVA (E. coli) + CMP + H(+). The protein operates within bacterial outer membrane biogenesis; LPS core biosynthesis. Involved in lipopolysaccharide (LPS) biosynthesis. Catalyzes the transfer of a single 3-deoxy-D-manno-octulosonate (Kdo) residue from CMP-Kdo to lipid IV(A), the tetraacyldisaccharide-1,4'-bisphosphate precursor of lipid A. Is strictly monofunctional, i.e. is capable of adding only a single Kdo residue to the acceptor lipid. The sequence is that of 3-deoxy-D-manno-octulosonic acid transferase (waaA) from Haemophilus influenzae (strain ATCC 51907 / DSM 11121 / KW20 / Rd).